The following is a 503-amino-acid chain: TGF-beta receptor type-1 (503 aa).

The signal sequence occupies residues 1 to 29 (MEAAAAAPRRPQLLIVLVAAATLLPGAKA). Residues 30-126 (LQCFCHLCTK…QSAGLGPVEL (97 aa)) lie on the Extracellular side of the membrane. 5 cysteine pairs are disulfide-bonded: cysteine 32-cysteine 50, cysteine 34-cysteine 37, cysteine 44-cysteine 67, cysteine 82-cysteine 96, and cysteine 97-cysteine 102. Asparagine 41 carries an N-linked (GlcNAc...) asparagine glycan. The chain crosses the membrane as a helical span at residues 127-147 (AAVIAGPVCFVCIALMLMVYI). Topologically, residues 148-503 (CHNRTVIHHR…QLSQQEGIKM (356 aa)) are cytoplasmic. Serine 165 is subject to Phosphoserine. The GS domain occupies 175-204 (TTLKDLIYDMTTSGSGSGLPLLVQRTIART). Phosphothreonine; by TGFBR2 occurs at positions 185 and 186. Phosphoserine; by TGFBR2 occurs at positions 187, 189, and 191. The FKBP1A-binding motif lies at 193-194 (LP). A Protein kinase domain is found at 205–495 (IVLQESIGKG…LRIKKTLSQL (291 aa)). Residues 211–219 (IGKGRFGEV) and lysine 232 each bind ATP. Lysine 268 is covalently cross-linked (Glycyl lysine isopeptide (Lys-Gly) (interchain with G-Cter in ubiquitin)). The active-site Proton acceptor is aspartate 333. Lysine 391 is covalently cross-linked (Glycyl lysine isopeptide (Lys-Gly) (interchain with G-Cter in SUMO)).

Belongs to the protein kinase superfamily. TKL Ser/Thr protein kinase family. TGFB receptor subfamily. As to quaternary structure, homodimer; in the endoplasmic reticulum but also at the cell membrane. Heterohexamer; TGFB1, TGFB2 and TGFB3 homodimeric ligands assemble a functional receptor composed of two TGFBR1 and TGFBR2 heterodimers to form a ligand-receptor heterohexamer. The respective affinity of TGBRB1 and TGFBR2 for the ligands may modulate the kinetics of assembly of the receptor and may explain the different biological activities of TGFB1, TGFB2 and TGFB3. Component of a complex composed of TSC22D1 (via N-terminus), TGFBR1 and TGFBR2; the interaction between TSC22D1 and TGFBR1 is inhibited by SMAD7 and promoted by TGFB1. Interacts with CD109; inhibits TGF-beta receptor activation in keratinocytes. Interacts with RBPMS. Interacts (unphosphorylated) with FKBP1A; prevents TGFBR1 phosphorylation by TGFBR2 and stabilizes it in the inactive conformation. Interacts with SMAD2, SMAD3 and ZFYVE9; ZFYVE9 recruits SMAD2 and SMAD3 to the TGF-beta receptor. Interacts with TRAF6 and MAP3K7; induces MAP3K7 activation by TRAF6. Interacts with PARD6A; involved in TGF-beta induced epithelial to mesenchymal transition. Interacts with NEDD4L. Interacts with SMAD7, SMURF1 and SMURF2; SMAD7 recruits NEDD4L, SMURF1 and SMURF2 to the TGF-beta receptor. Interacts with USP15 and VPS39. Interacts with SDCBP (via C-terminus). Interacts with CAV1 and this interaction is impaired in the presence of SDCBP. Interacts with APPL1; interaction is TGF beta dependent; mediates trafficking of the TGFBR1 from the endosomes to the nucleus via microtubules in a TRAF6-dependent manner. Interacts with GPR50; this interaction promotes the constitutive activation of SMAD signaling pathway. Requires Mg(2+) as cofactor. The cofactor is Mn(2+). Post-translationally, phosphorylated at basal levels in the absence of ligand. Activated upon phosphorylation by TGFBR2, mainly in the GS domain. Phosphorylation in the GS domain abrogates FKBP1A-binding. In terms of processing, N-Glycosylated. Ubiquitinated; undergoes ubiquitination catalyzed by several E3 ubiquitin ligases including SMURF1, SMURF2 and NEDD4L2. Results in the proteasomal and/or lysosomal degradation of the receptor thereby negatively regulating its activity. Deubiquitinated by USP15, leading to stabilization of the protein and enhanced TGF-beta signal. Its ubiquitination and proteasome-mediated degradation is negatively regulated by SDCBP. Ubiquitinated by BFAR via'Lys-63'-linked ubiquitination at Lys-268, leading to TGF-beta signaling activation.

The protein resides in the cell membrane. Its subcellular location is the cell junction. It localises to the tight junction. The protein localises to the membrane raft. It is found in the cell surface. It catalyses the reaction L-threonyl-[receptor-protein] + ATP = O-phospho-L-threonyl-[receptor-protein] + ADP + H(+). It carries out the reaction L-seryl-[receptor-protein] + ATP = O-phospho-L-seryl-[receptor-protein] + ADP + H(+). Kept in an inactive conformation by FKBP1A preventing receptor activation in absence of ligand. CD109 is another inhibitor of the receptor. In terms of biological role, transmembrane serine/threonine kinase forming with the TGF-beta type II serine/threonine kinase receptor, TGFBR2, the non-promiscuous receptor for the TGF-beta cytokines TGFB1, TGFB2 and TGFB3. Transduces the TGFB1, TGFB2 and TGFB3 signal from the cell surface to the cytoplasm and is thus regulating a plethora of physiological and pathological processes including cell cycle arrest in epithelial and hematopoietic cells, control of mesenchymal cell proliferation and differentiation, wound healing, extracellular matrix production, immunosuppression and carcinogenesis. The formation of the receptor complex composed of 2 TGFBR1 and 2 TGFBR2 molecules symmetrically bound to the cytokine dimer results in the phosphorylation and the activation of TGFBR1 by the constitutively active TGFBR2. Activated TGFBR1 phosphorylates SMAD2 which dissociates from the receptor and interacts with SMAD4. The SMAD2-SMAD4 complex is subsequently translocated to the nucleus where it modulates the transcription of the TGF-beta-regulated genes. This constitutes the canonical SMAD-dependent TGF-beta signaling cascade. Also involved in non-canonical, SMAD-independent TGF-beta signaling pathways. For instance, TGFBR1 induces TRAF6 autoubiquitination which in turn results in MAP3K7 ubiquitination and activation to trigger apoptosis. Also regulates epithelial to mesenchymal transition through a SMAD-independent signaling pathway through PARD6A phosphorylation and activation. The chain is TGF-beta receptor type-1 (Tgfbr1) from Mus musculus (Mouse).